The sequence spans 668 residues: E3 ubiquitin-protein ligase RNF139 (668 aa).

Ala-2 carries the post-translational modification N-acetylalanine. The next 11 membrane-spanning stretches (helical) occupy residues 51–71 (IGLQ…VLIL), 85–105 (AFLL…HIDF), 125–145 (SLWM…VTLL), 154–174 (LMIL…PLHI), 178–198 (VVLM…AVKL), 293–313 (GMSA…LAFI), 323–343 (LGFV…LSGL), 356–376 (MCLL…PVLM), 390–410 (FPVL…SYVL), 420–440 (LFAV…SLTV), and 470–490 (IIEF…MMFE). The RING-type; atypical zinc finger occupies 547–586 (CAICYHEFTTSARITPCNHYFHALCLRKWLYIQDTCPMCH). The interval 602–668 (SNNNGFIAPN…AAAEFNDDTD (67 aa)) is disordered. Positions 618–630 (EALREDAAGSDRE) are enriched in basic and acidic residues. The span at 631 to 641 (LNEDDSTDCDD) shows a compositional bias: acidic residues. Position 636 is a phosphoserine (Ser-636). Phosphothreonine occurs at positions 637 and 667.

As to quaternary structure, interacts with VHL. Interacts with MHC class I and HM13. Component of SCAP-SREBP complex composed of SREBF2, SCAP and RNF139; the complex hampers the interaction between SCAP and SEC24B, thereby reducing SREBF2 proteolytic processing. Interacts with SREBF2 (via C-terminal domain). Interacts with SCAP; the interaction inhibits the interaction of SCAP with SEC24B and hampering the ER to Golgi transport of the SCAP-SREBP complex. Interacts with SEC24B. Interacts with INSIG1 and INSIG2. Interacts with EIF3F and EIF3H; the interaction leads to protein translation inhibitions in a ubiquitination-dependent manner. Interacts with XBP1 isoform 1; the interaction induces ubiquitination and degradation of XBP1 isoform 1. Interacts with AUP1, AMFR and UBE2G2; interaction with AUP1 facilitates interaction of RNF139 with ubiquitin-conjugating enzyme UBE2G2 and ubiquitin ligase AMFR/gp78, leading to sterol-induced ubiquitination of HMGCR and its subsequent proteasomal degradation. Post-translationally, autoubiquitinated. Ubiquitination is induced by sterol and leads to ist degradation via the ubiquitin-proteasome pathway.

The protein resides in the endoplasmic reticulum membrane. The catalysed reaction is S-ubiquitinyl-[E2 ubiquitin-conjugating enzyme]-L-cysteine + [acceptor protein]-L-lysine = [E2 ubiquitin-conjugating enzyme]-L-cysteine + N(6)-ubiquitinyl-[acceptor protein]-L-lysine.. The protein operates within protein modification; protein ubiquitination. Its function is as follows. E3-ubiquitin ligase; acts as a negative regulator of cell proliferation through mechanisms involving G2/M arrest and cell death. Required for MHC class I ubiquitination in cells expressing the cytomegalovirus protein US2 before dislocation from the endoplasmic reticulum (ER). Affects SREBP processing by hindering the SREBP-SCAP complex translocation from the ER to the Golgi, thereby reducing SREBF2 target gene expression. Involved in the sterol-accelerated degradation of HMGCR. This is achieved through binding to INSIG1 and/or INSIG2 at the ER membrane. In addition, interaction of RNF139 with AUP1 facilitates interaction of RNF139 with ubiquitin-conjugating enzyme UBE2G2 and ubiquitin ligase AMFR, leading to ubiquitination of HMGCR. The ubiquitinated HMGCR is then released from the ER by the complex into the cytosol for subsequent destruction. Required for INSIG1 ubiquitination. May be required for EIF3 complex ubiquitination. The sequence is that of E3 ubiquitin-protein ligase RNF139 from Mus musculus (Mouse).